Here is a 329-residue protein sequence, read N- to C-terminus: Malate dehydrogenase (329 aa).

12 to 18 (GAAGQIC) serves as a coordination point for NAD(+). R95 and R101 together coordinate substrate. NAD(+) is bound by residues N108, Q115, and 132–134 (VGN). Substrate-binding residues include N134 and R165. Catalysis depends on H190, which acts as the Proton acceptor.

This sequence belongs to the LDH/MDH superfamily. MDH type 2 family. In terms of assembly, homodimer.

The enzyme catalyses (S)-malate + NAD(+) = oxaloacetate + NADH + H(+). Its function is as follows. Catalyzes the reversible oxidation of malate to oxaloacetate. The chain is Malate dehydrogenase from Aquaspirillum arcticum.